A 189-amino-acid chain; its full sequence is Probable chorismate pyruvate-lyase (189 aa).

Residues Arg77, Leu115, and Glu174 each contribute to the substrate site.

It belongs to the UbiC family.

It localises to the cytoplasm. It carries out the reaction chorismate = 4-hydroxybenzoate + pyruvate. It participates in cofactor biosynthesis; ubiquinone biosynthesis. In terms of biological role, removes the pyruvyl group from chorismate, with concomitant aromatization of the ring, to provide 4-hydroxybenzoate (4HB) for the ubiquinone pathway. The protein is Probable chorismate pyruvate-lyase of Shewanella sp. (strain MR-7).